A 343-amino-acid polypeptide reads, in one-letter code: Heat-inducible transcription repressor HrcA (343 aa).

The protein belongs to the HrcA family.

Negative regulator of class I heat shock genes (grpE-dnaK-dnaJ and groELS operons). Prevents heat-shock induction of these operons. This Clostridium botulinum (strain Alaska E43 / Type E3) protein is Heat-inducible transcription repressor HrcA.